The primary structure comprises 74 residues: Consomatin Ma1 (74 aa).

The first 22 residues, 1-22, serve as a signal peptide directing secretion; the sequence is MQTAYWVMVMMMVWITAPLSEG. Positions 23–57 are excised as a propeptide; the sequence is GKLNGEIRGLVSHILIPQHTLRSLTSRDRSDNGGS. Cys-63 and Cys-68 are disulfide-bonded. At Trp-65 the chain carries D-tryptophan. A 4-hydroxyproline mark is found at Pro-69, Pro-70, and Pro-72.

Belongs to the conotoxin C superfamily. Consomatin family. As to expression, expressed by the venom duct.

The protein resides in the secreted. Functionally, moderately activates human somatostatin receptors (SSTR) with a preferential activation of SSTR1 and SSTR4. In vivo, does not cause behavioral changes in mice within a few minutes of intracranial injection, but causes a progressive loss of movement thereafter. Four to five hours after injection, mice recover, even with the highest dose tested. Shows antinociception and antihyperalgesia activities in two mouse models of acute pain, most probably by acting outside the central nervous system. This is Consomatin Ma1 from Conus magus (Magical cone).